A 61-amino-acid polypeptide reads, in one-letter code: Large ribosomal subunit protein uL30 (61 aa).

Belongs to the universal ribosomal protein uL30 family. In terms of assembly, part of the 50S ribosomal subunit.

In Frankia casuarinae (strain DSM 45818 / CECT 9043 / HFP020203 / CcI3), this protein is Large ribosomal subunit protein uL30.